The sequence spans 476 residues: Protein transport protein Sec61 subunit alpha isoform 2 (476 aa).

The Cytoplasmic segment spans residues 1–33 (MGIKFLEVIKPFCAVLPEIQKPERKIQFREKVL). Residues 34-53 (WTAITLFIFLVCCQIPLFGI) form a helical membrane-spanning segment. The Lumenal segment spans residues 54–76 (MSSDSADPFYWMRVILASNRGTL). A helical membrane pass occupies residues 77-96 (MELGISPIVTSGLIMQLLAG). At 97-117 (AKIIEVGDTPKDRALFNGAQK) the chain is on the cytoplasmic side. Residues 118-138 (LFGMIITIGQAIVYVMTGMYG) form a helical membrane-spanning segment. Over 139-144 (DPAEMG) the chain is Lumenal. The chain crosses the membrane as a helical span at residues 145–165 (AGICLLIIIQLFVAGLIVLLL). The Cytoplasmic portion of the chain corresponds to 166–172 (DELLQKG). Residues 173–193 (YGLGSGISLFIATNICETIVW) form a helical membrane-spanning segment. Over 194–240 (KAFSPTTINTGRGTEFEGAVIALFHLLATRTDKVRALREAFYRQNLP) the chain is Lumenal. Residues 241 to 261 (NLMNLIATVFVFAVVIYFQGF) form a helical membrane-spanning segment. The Cytoplasmic segment spans residues 262–288 (RVDLPIKSARYRGQYSSYPIKLFYTSN). The chain crosses the membrane as a helical span at residues 289 to 309 (IPIILQSALVSNLYVISQMLS). At 310–354 (VRFSGNFLVNLLGQWADVSGGGPARSYPVGGLCYYLSPPESMGAI) the chain is on the lumenal side. The helical transmembrane segment at 355–375 (FEDPVHVVVYIIFMLGSCAFF) threads the bilayer. Residues 376–420 (SKTWIEVSGSSAKDVAKQLKEQQMVMRGHRDTSMVHELNRYIPTA) lie on the Cytoplasmic side of the membrane. Residues 421–441 (AAFGGLCIGALSVLADFLGAI) form a helical membrane-spanning segment. Residues 442–445 (GSGT) are Lumenal-facing. Residues 446 to 462 (GILLAVTIIYQYFEIFV) traverse the membrane as a helical segment. The Cytoplasmic portion of the chain corresponds to 463-476 (KEQAEVGGMGALFF).

This sequence belongs to the SecY/SEC61-alpha family. In terms of assembly, the SEC61 channel-forming translocon complex consists of channel-forming core components SEC61A1, SEC61B and SEC61G and different auxiliary components such as SEC62 and SEC63.

The protein resides in the endoplasmic reticulum membrane. Functionally, component of SEC61 channel-forming translocon complex that mediates transport of signal peptide-containing precursor polypeptides across the endoplasmic reticulum (ER). Forms a ribosome receptor and a gated pore in the ER membrane, both functions required for cotranslational translocation of nascent polypeptides. This chain is Protein transport protein Sec61 subunit alpha isoform 2 (SEC61A2), found in Homo sapiens (Human).